The primary structure comprises 274 residues: Large ribosomal subunit protein uL2 (274 aa).

Disordered stretches follow at residues 28 to 53 and 221 to 274; these read KPYA…TTRH and RGTA…RTKK. Over residues 39-48 the composition is skewed to low complexity; the sequence is KSGGRNNNGR. Residues 253–274 are compositionally biased toward basic residues; that stretch reads KGKKTRKNKRTEHFIVHRRTKK.

This sequence belongs to the universal ribosomal protein uL2 family. In terms of assembly, part of the 50S ribosomal subunit. Forms a bridge to the 30S subunit in the 70S ribosome.

One of the primary rRNA binding proteins. Required for association of the 30S and 50S subunits to form the 70S ribosome, for tRNA binding and peptide bond formation. It has been suggested to have peptidyltransferase activity; this is somewhat controversial. Makes several contacts with the 16S rRNA in the 70S ribosome. In Proteus mirabilis (strain HI4320), this protein is Large ribosomal subunit protein uL2.